The sequence spans 143 residues: Fido domain-containing protein DDB_G0283145 (143 aa).

The Fido domain maps to 1–128 (MKGIIVSDGV…TSHLALIILN (128 aa)). A helical transmembrane segment spans residues 49-69 (SSPYAVAAWLLHAFVSIHPFI).

Its subcellular location is the membrane. The chain is Fido domain-containing protein DDB_G0283145 from Dictyostelium discoideum (Social amoeba).